Reading from the N-terminus, the 121-residue chain is uncharacterized protein (121 aa).

The HIT domain maps to 7–121 (IFCKIVRGEV…GGREMSWPPG (115 aa)). Residues 105–109 (HLHLH) carry the Histidine triad motif motif.

This is an uncharacterized protein from Aquifex aeolicus (strain VF5).